A 342-amino-acid chain; its full sequence is Lumican (342 aa).

The N-terminal stretch at 1–18 (MNLGVFPLLLALIGGASS) is a signal peptide. Y20, Y23, and Y34 each carry sulfotyrosine. The 39-residue stretch at 32 to 70 (ALYGRSSPNCAPECNCPESYPSAMYCDELKLKSVPMVPP) folds into the LRRNT domain. LRR repeat units follow at residues 71–92 (GIKYLYLRNNQIDHIDDKAFEN), 95–118 (DLQWLILDHNLLENSKIKGKVFSK), 121–141 (QLKKLHINYNNLTESVGPLPK), 142–163 (SLVDLQLTNNKISKLGSFDGLV), 164–185 (NLTFIHLQHNQLKEDAVSAALK), 189–209 (SLEYLDLSFNQMTKLPSGLPV), 210–231 (SLLTLYLDNNKISNIPDEYFKR), and 234–254 (ALQYLRLSHNELADSGVPGNS). Residue N92 is glycosylated (N-linked (GlcNAc...) (keratan sulfate) asparagine). The N-linked (GlcNAc...) (keratan sulfate) asparagine glycan is linked to N131. N164 carries N-linked (GlcNAc...) (keratan sulfate) asparagine glycosylation. A glycan (N-linked (GlcNAc...) (keratan sulfate) asparagine) is linked at N256. LRR repeat units follow at residues 259–280 (SLLELDLSYNKLKSIPTVNENL) and 281–300 (ENYYLEVNELEKFDVKSFCK). C299 and C332 form a disulfide bridge. S308 carries the post-translational modification Phosphoserine. The stretch at 309-330 (KIKHLRLDGNHITQTSLPPDMY) is one LRR 11 repeat.

Belongs to the small leucine-rich proteoglycan (SLRP) family. SLRP class II subfamily. In terms of assembly, binds to laminin. Sulfated on tyrosine residue(s). Post-translationally, contains keratan sulfate. In terms of tissue distribution, cornea and other tissues.

The protein localises to the secreted. It is found in the extracellular space. Its subcellular location is the extracellular matrix. The chain is Lumican (LUM) from Bos taurus (Bovine).